A 689-amino-acid polypeptide reads, in one-letter code: 7SK snRNA methylphosphate capping enzyme (689 aa).

Position 1 is an N-acetylmethionine (Met-1). Over residues Met-1–Pro-10 the composition is skewed to basic and acidic residues. Residues Met-1 to Phe-167 form a disordered region. Positions Gly-52–Gln-84 are enriched in low complexity. Residues Ser-57, Ser-60, Ser-69, and Ser-101 each carry the phosphoserine modification. Arg-117 bears the Omega-N-methylarginine mark. Ser-152, Ser-175, and Ser-179 each carry phosphoserine. Position 213 is a phosphothreonine (Thr-213). 3 positions are modified to phosphoserine: Ser-216, Ser-217, and Ser-254. Positions Thr-258–His-269 are enriched in basic residues. The interval Thr-258 to Gln-314 is disordered. Position 291 is a phosphothreonine (Thr-291). 2 positions are modified to phosphoserine: Ser-330 and Ser-344. Positions Leu-332–Lys-407 are disordered. The span at Gly-338–Ser-359 shows a compositional bias: low complexity. Over residues Ser-360–Ser-369 the composition is skewed to basic residues. Ser-390 carries the post-translational modification Phosphoserine. S-adenosyl-L-methionine contacts are provided by residues Tyr-422, Arg-433, Gly-451–Asn-453, Asp-474–Ile-475, Asn-559–Tyr-560, and Leu-581. Residues Asp-431 to Ser-686 form the Bin3-type SAM domain. A Glycyl lysine isopeptide (Lys-Gly) (interchain with G-Cter in SUMO2) cross-link involves residue Lys-643.

Belongs to the methyltransferase superfamily. In terms of assembly, core component of the 7SK RNP complex, at least composed of 7SK RNA, LARP7, MEPCE, HEXIM1 (or HEXIM2) and P-TEFb (composed of CDK9 and CCNT1/cyclin-T1). Interacts with METTL16. Interacts with RBM7; upon genotoxic stress this interaction is enhanced, triggering the release of inactive P-TEFb complex from the core, yielding to P-TEFb complex activation. Dephosphorylated at Ser-152 by the PNUTS-PP1 complex, promoting RNA polymerase II transcription pause-release. As to expression, expressed in chronic myeloid leukemia cells, adrenal gland, brain, cerebellum, kidney, lung, mammary gland and testis. Weakly or not expressed in other tissues.

It is found in the nucleus. It carries out the reaction a 5'-end triphospho-guanosine-ribonucleotide-snRNA + S-adenosyl-L-methionine = a 5'-end methyltriphosphate-guanosine-ribonucleotide-snRNA + S-adenosyl-L-homocysteine. Functionally, S-adenosyl-L-methionine-dependent methyltransferase that adds a methylphosphate cap at the 5'-end of 7SK snRNA (7SK RNA), leading to stabilize it. Also has a non-enzymatic function as part of the 7SK RNP complex: the 7SK RNP complex sequesters the positive transcription elongation factor b (P-TEFb) in a large inactive 7SK RNP complex preventing RNA polymerase II phosphorylation and subsequent transcriptional elongation. The 7SK RNP complex also promotes snRNA gene transcription by RNA polymerase II via interaction with the little elongation complex (LEC). In the 7SK RNP complex, MEPCE is required to stabilize 7SK RNA and facilitate the assembly of 7SK RNP complex. MEPCE has a non-enzymatic function in the 7SK RNP complex; interaction with LARP7 within the 7SK RNP complex occluding its catalytic center. Also required for stability of U6 snRNAs. In Homo sapiens (Human), this protein is 7SK snRNA methylphosphate capping enzyme.